A 312-amino-acid chain; its full sequence is Signal peptidase I (312 aa).

Residues I7–L27 traverse the membrane as a helical segment. Over I28–S63 the chain is Cytoplasmic. Residues L64–I84 traverse the membrane as a helical segment. Over P85–Y312 the chain is Extracellular. Residues S88 and K142 contribute to the active site.

It belongs to the peptidase S26 family.

It is found in the cell membrane. It carries out the reaction Cleavage of hydrophobic, N-terminal signal or leader sequences from secreted and periplasmic proteins.. This Buchnera aphidicola subsp. Schizaphis graminum (strain Sg) protein is Signal peptidase I (lepB).